A 187-amino-acid chain; its full sequence is Cell division protein SepF (187 aa).

A disordered region spans residues 13–74; the sequence is GLAEDDRYAE…PAPATTAQVT (62 aa). Residues 16–65 show a composition bias toward basic and acidic residues; it reads EDDRYAEDTEPETTRPRVEAAREVRVESRHEARPEVRHEPRPEVSVERRP.

This sequence belongs to the SepF family. In terms of assembly, homodimer. Interacts with FtsZ.

The protein localises to the cytoplasm. Cell division protein that is part of the divisome complex and is recruited early to the Z-ring. Probably stimulates Z-ring formation, perhaps through the cross-linking of FtsZ protofilaments. Its function overlaps with FtsA. In Kineococcus radiotolerans (strain ATCC BAA-149 / DSM 14245 / SRS30216), this protein is Cell division protein SepF.